A 62-amino-acid polypeptide reads, in one-letter code: uncharacterized protein (62 aa).

2 consecutive 4Fe-4S ferredoxin-type domains span residues 2 to 31 (AVTIDYSLCKGAECAECVNNCPMEVFEIEG) and 32 to 62 (DKVVVARPDDCTYCGVCEDVCPTGAVKVEPE). 8 residues coordinate [4Fe-4S] cluster: C10, C15, C18, C22, C42, C45, C48, and C52.

It depends on [4Fe-4S] cluster as a cofactor.

This is an uncharacterized protein from Methanocaldococcus jannaschii (strain ATCC 43067 / DSM 2661 / JAL-1 / JCM 10045 / NBRC 100440) (Methanococcus jannaschii).